Here is a 616-residue protein sequence, read N- to C-terminus: Dihydroxy-acid dehydratase (616 aa).

Aspartate 81 provides a ligand contact to Mg(2+). Cysteine 122 lines the [2Fe-2S] cluster pocket. Residues aspartate 123 and lysine 124 each coordinate Mg(2+). Lysine 124 carries the N6-carboxylysine modification. Position 195 (cysteine 195) interacts with [2Fe-2S] cluster. A Mg(2+)-binding site is contributed by glutamate 491. The active-site Proton acceptor is the serine 517.

It belongs to the IlvD/Edd family. As to quaternary structure, homodimer. The cofactor is [2Fe-2S] cluster. It depends on Mg(2+) as a cofactor.

It carries out the reaction (2R)-2,3-dihydroxy-3-methylbutanoate = 3-methyl-2-oxobutanoate + H2O. It catalyses the reaction (2R,3R)-2,3-dihydroxy-3-methylpentanoate = (S)-3-methyl-2-oxopentanoate + H2O. The protein operates within amino-acid biosynthesis; L-isoleucine biosynthesis; L-isoleucine from 2-oxobutanoate: step 3/4. It functions in the pathway amino-acid biosynthesis; L-valine biosynthesis; L-valine from pyruvate: step 3/4. Its function is as follows. Functions in the biosynthesis of branched-chain amino acids. Catalyzes the dehydration of (2R,3R)-2,3-dihydroxy-3-methylpentanoate (2,3-dihydroxy-3-methylvalerate) into 2-oxo-3-methylpentanoate (2-oxo-3-methylvalerate) and of (2R)-2,3-dihydroxy-3-methylbutanoate (2,3-dihydroxyisovalerate) into 2-oxo-3-methylbutanoate (2-oxoisovalerate), the penultimate precursor to L-isoleucine and L-valine, respectively. This Tolumonas auensis (strain DSM 9187 / NBRC 110442 / TA 4) protein is Dihydroxy-acid dehydratase.